The following is a 507-amino-acid chain: MSSTETYEPLLTRLHSDSQITERSSPEIEEFLRRRGSTVTPRWWLKLAVWESKLLWTLSGASIVVSVLNYMLSFVTVMFTGHLGSLQLAGASIATVGIQGLAYGIMLGMASAVQTVCGQAYGARQYSSMGIICQRAMVLHLAAAVFLTFLYWYSGPILKTMGQSVAIAHEGQIFARGMIPQIYAFALACPMQRFLQAQNIVNPLAYMSLGVFLLHTLLTWLVTNVLDFGLLGAALILSFSWWLLVAVNGMYILMSPNCKETWTGFSTRAFRGIWPYFKLTVASAVMLCLEIWYNQGLVIISGLLSNPTISLDAISICMYYLNWDMQFMLGLSAAISVRVSNELGAGNPRVAMLSVVVVNITTVLISSVLCVIVLVFRVGLSKAFTSDAEVIAAVSDLFPLLAVSIFLNGIQPILSGVAIGSGWQAVVAYVNLVTYYVIGLPIGCVLGFKTSLGVAGIWWGMIAGVILQTLTLIVLTLKTNWTSEVENAAQRVKTSATENQEMANAGV.

At 1 to 62 (MSSTETYEPL…KLLWTLSGAS (62 aa)) the chain is on the cytoplasmic side. The helical transmembrane segment at 63 to 83 (IVVSVLNYMLSFVTVMFTGHL) threads the bilayer. At 84 to 92 (GSLQLAGAS) the chain is on the vacuolar side. Residues 93 to 113 (IATVGIQGLAYGIMLGMASAV) traverse the membrane as a helical segment. Residues 114–137 (QTVCGQAYGARQYSSMGIICQRAM) are Cytoplasmic-facing. A helical membrane pass occupies residues 138–158 (VLHLAAAVFLTFLYWYSGPIL). Over 159-170 (KTMGQSVAIAHE) the chain is Vacuolar. A helical transmembrane segment spans residues 171–191 (GQIFARGMIPQIYAFALACPM). Over 192-202 (QRFLQAQNIVN) the chain is Cytoplasmic. Residues 203-223 (PLAYMSLGVFLLHTLLTWLVT) traverse the membrane as a helical segment. N224 is a topological domain (vacuolar). A helical transmembrane segment spans residues 225-245 (VLDFGLLGAALILSFSWWLLV). At 246–283 (AVNGMYILMSPNCKETWTGFSTRAFRGIWPYFKLTVAS) the chain is on the cytoplasmic side. The helical transmembrane segment at 284-304 (AVMLCLEIWYNQGLVIISGLL) threads the bilayer. The Vacuolar portion of the chain corresponds to 305-312 (SNPTISLD). A helical transmembrane segment spans residues 313-333 (AISICMYYLNWDMQFMLGLSA). Residues 334–355 (AISVRVSNELGAGNPRVAMLSV) lie on the Cytoplasmic side of the membrane. Residues 356–376 (VVVNITTVLISSVLCVIVLVF) traverse the membrane as a helical segment. The Vacuolar segment spans residues 377–389 (RVGLSKAFTSDAE). A helical membrane pass occupies residues 390-410 (VIAAVSDLFPLLAVSIFLNGI). Residues 411–425 (QPILSGVAIGSGWQA) are Cytoplasmic-facing. A helical membrane pass occupies residues 426–446 (VVAYVNLVTYYVIGLPIGCVL). The Vacuolar segment spans residues 447-453 (GFKTSLG). A helical transmembrane segment spans residues 454-474 (VAGIWWGMIAGVILQTLTLIV). Over 475–507 (LTLKTNWTSEVENAAQRVKTSATENQEMANAGV) the chain is Cytoplasmic.

This sequence belongs to the multi antimicrobial extrusion (MATE) (TC 2.A.66.1) family. As to expression, expressed in reproductive tissues, from buds to siliques. Restricted to the endothelium layer of the ovule and the seed coat.

Its subcellular location is the vacuole membrane. Its pathway is secondary metabolite biosynthesis; flavonoid biosynthesis. Acts as a flavonoid/H(+)-antiporter that control the vacuolar sequestration of flavonoids in the seed coat endothelium. Could transport the anthocyanin cyanidin-3-O-glucoside and epicatechin 3'-O-glucoside in vitro. The chain is Protein DETOXIFICATION 41 from Arabidopsis thaliana (Mouse-ear cress).